A 129-amino-acid polypeptide reads, in one-letter code: Small ribosomal subunit protein uS11c (129 aa).

Belongs to the universal ribosomal protein uS11 family. As to quaternary structure, part of the 30S ribosomal subunit.

It localises to the plastid. It is found in the chloroplast. This is Small ribosomal subunit protein uS11c from Euglena gracilis.